The sequence spans 952 residues: Leucine--tRNA ligase (952 aa).

Residues Pro66–His77 carry the 'HIGH' region motif. Positions Lys722–Ser726 match the 'KMSKS' region motif. Lys725 lines the ATP pocket.

The protein belongs to the class-I aminoacyl-tRNA synthetase family.

It localises to the cytoplasm. It catalyses the reaction tRNA(Leu) + L-leucine + ATP = L-leucyl-tRNA(Leu) + AMP + diphosphate. In Corynebacterium glutamicum (strain R), this protein is Leucine--tRNA ligase.